A 351-amino-acid chain; its full sequence is MSQMENSTKKVESVADVEVVATENAKVEQKPTSPADAIQLKVNANSTIKNLKTLVSIVKLTESGAHIGLNPKKWNPKMANYIHAKRSNNHVIDILKTILFLDRAYKFLQEVAQNGGTVMFVGTRGRVVKELIKAEAERTNSFYVTQRWLGGTLTNFANISRSLKKFNSNLALLESEEINKYSKKEQIAINKETAKLEKFYGGIKTMKQRPDVLILVDPVNDVNAIKEARKLNIPVIALANTNADPQLIDYIIPVNNYSVKSITLILGVLADAIAELRGEPTKIVGRPDSEIVLPETKSSWRQNNYDPSKRGYNPKYVNHKSTFNKFNNKKPAEATSQAKTNEKIVIKAETN.

The disordered stretch occupies residues 302–351 (QNNYDPSKRGYNPKYVNHKSTFNKFNNKKPAEATSQAKTNEKIVIKAETN). A compositionally biased stretch (basic and acidic residues) spans 340–351 (TNEKIVIKAETN).

The protein belongs to the universal ribosomal protein uS2 family.

This Ureaplasma urealyticum serovar 10 (strain ATCC 33699 / Western) protein is Small ribosomal subunit protein uS2.